The following is a 148-amino-acid chain: MGYNQQLLRVDYEKIYPINDELSSKILGVIKNLNGKSDILVISDYAKGLITKELMDDIKKEFKGKILIDPKPKNDFYKDVYLIKPNLKEASQILGREIENKDDELEKSGLESVDKYNSNFVITRGEKGATLITVDEIFTMFQQKSKRS.

This is an uncharacterized protein from Methanocaldococcus jannaschii (strain ATCC 43067 / DSM 2661 / JAL-1 / JCM 10045 / NBRC 100440) (Methanococcus jannaschii).